A 125-amino-acid polypeptide reads, in one-letter code: Apolipoprotein C-IV (125 aa).

The signal sequence occupies residues 1–27; it reads MSLLRHSLQALPALCLCVLVLACIGAC.

The protein belongs to the apolipoprotein C4 family.

The protein resides in the secreted. Functionally, may participate in lipoprotein metabolism. The protein is Apolipoprotein C-IV (APOC4) of Ateles geoffroyi (Black-handed spider monkey).